The sequence spans 502 residues: Probable cytosol aminopeptidase (502 aa).

2 residues coordinate Mn(2+): Lys275 and Asp280. The active site involves Lys287. Positions 298, 357, and 359 each coordinate Mn(2+). Arg361 is an active-site residue.

This sequence belongs to the peptidase M17 family. It depends on Mn(2+) as a cofactor.

The protein resides in the cytoplasm. It carries out the reaction Release of an N-terminal amino acid, Xaa-|-Yaa-, in which Xaa is preferably Leu, but may be other amino acids including Pro although not Arg or Lys, and Yaa may be Pro. Amino acid amides and methyl esters are also readily hydrolyzed, but rates on arylamides are exceedingly low.. The enzyme catalyses Release of an N-terminal amino acid, preferentially leucine, but not glutamic or aspartic acids.. In terms of biological role, presumably involved in the processing and regular turnover of intracellular proteins. Catalyzes the removal of unsubstituted N-terminal amino acids from various peptides. The protein is Probable cytosol aminopeptidase of Ralstonia pickettii (strain 12J).